The following is a 517-amino-acid chain: Pentatricopeptide repeat-containing protein At5g42450, mitochondrial (517 aa).

The transit peptide at 1-23 (MLHMILSQRVILLRKYHSSANAL) directs the protein to the mitochondrion. 9 PPR repeats span residues 57–91 (DVISATAVIGRFVKESRHVEASQAFKRLLCLGIRP), 92–126 (NEFTFGTVIGSSTTSRDVKLGKQLHCYALKMGLAS), 127–157 (NVFVGSAVLNCYVKLSTLTDARRCFDDTRDP), 158–188 (NVVSITNLISGYLKKHEFEEALSLFRAMPER), 189–223 (SVVTWNAVIGGFSQTGRNEEAVNTFVDMLREGVVI), 225–259 (NESTFPCAITAISNIASHGAGKSIHACAIKFLGKR), 261–291 (NVFVWNSLISFYSKCGNMEDSLLAFNKLEEE), 294–329 (NIVSWNSMIWGYAHNGRGEEAVAMFEKMVKDTNLRP), and 368–398 (ELEHYACMVDMLSRSGRFKEAEELIKSMPLD). Residues 403–478 (FWKALLGGCQ…FTGCSWIEVR (76 aa)) are type E motif. The tract at residues 479–509 (DQIRVFVNADKNNELKDEVYRMLALVSQHLE) is type E(+) motif.

It belongs to the PPR family. PCMP-E subfamily.

The protein localises to the mitochondrion. The polypeptide is Pentatricopeptide repeat-containing protein At5g42450, mitochondrial (PCMP-E102) (Arabidopsis thaliana (Mouse-ear cress)).